The primary structure comprises 360 residues: Phospho-N-acetylmuramoyl-pentapeptide-transferase (360 aa).

The next 10 membrane-spanning stretches (helical) occupy residues 27 to 47, 71 to 91, 94 to 114, 132 to 152, 168 to 188, 199 to 219, 236 to 256, 263 to 283, 288 to 308, and 338 to 358; these read IVSL…MIAF, TPTM…LLWV, NNPY…VGFV, WKYF…YSFG, VMPQ…VGTS, GLAI…AWAT, AGEL…FLWF, VFMG…IAVL, FLLV…ILQV, and VIVR…ATLK.

The protein belongs to the glycosyltransferase 4 family. MraY subfamily. Mg(2+) serves as cofactor.

The protein localises to the cell inner membrane. It catalyses the reaction UDP-N-acetyl-alpha-D-muramoyl-L-alanyl-gamma-D-glutamyl-meso-2,6-diaminopimeloyl-D-alanyl-D-alanine + di-trans,octa-cis-undecaprenyl phosphate = di-trans,octa-cis-undecaprenyl diphospho-N-acetyl-alpha-D-muramoyl-L-alanyl-D-glutamyl-meso-2,6-diaminopimeloyl-D-alanyl-D-alanine + UMP. Its pathway is cell wall biogenesis; peptidoglycan biosynthesis. Its function is as follows. Catalyzes the initial step of the lipid cycle reactions in the biosynthesis of the cell wall peptidoglycan: transfers peptidoglycan precursor phospho-MurNAc-pentapeptide from UDP-MurNAc-pentapeptide onto the lipid carrier undecaprenyl phosphate, yielding undecaprenyl-pyrophosphoryl-MurNAc-pentapeptide, known as lipid I. The protein is Phospho-N-acetylmuramoyl-pentapeptide-transferase of Photorhabdus laumondii subsp. laumondii (strain DSM 15139 / CIP 105565 / TT01) (Photorhabdus luminescens subsp. laumondii).